The chain runs to 68 residues: uncharacterized protein (68 aa).

This is an uncharacterized protein from Bacillus subtilis (strain 168).